The following is a 160-amino-acid chain: Cathelin-related peptide SC5 (160 aa).

Positions 1-29 (METQRASLSLGRRSLWLLLLGLVLASASA) are cleaved as a signal peptide. Positions 30–131 (QALSYREAVL…DITCAEPQSV (102 aa)) are excised as a propeptide. 2 disulfide bridges follow: cysteine 86–cysteine 97 and cysteine 108–cysteine 125.

The protein belongs to the cathelicidin family.

It localises to the secreted. Its function is as follows. Broad spectrum bactericidal agent. The protein is Cathelin-related peptide SC5 of Ovis aries (Sheep).